The sequence spans 385 residues: 6-hydroxynicotinate 3-monooxygenase (385 aa).

Positions 1–20 (MSQSPRIAVVGAGLGGAAAA) are cleaved as a signal peptide. FAD contacts are provided by residues glycine 15, 34-35 (EQ), histidine 47, arginine 108, and leucine 130. Catalysis depends on histidine 47, which acts as the Proton acceptor. Tyrosine 215 acts as the Proton acceptor in catalysis. FAD contacts are provided by residues aspartate 294 and 307 to 308 (AA).

This sequence belongs to the 6-hydroxynicotinate 3-monooxygenase family. Monomer. It depends on FAD as a cofactor.

It carries out the reaction 6-hydroxynicotinate + NADH + O2 + 2 H(+) = 2,5-dihydroxypyridine + CO2 + NAD(+) + H2O. Inhibited competitively by nicotinic acid with a Ki of 0.49 mM. Inhibited by thiol-specific compounds p-chloromercuribenzoate, DTNB, Ag(2)SO(4), HgCl(2), CuCl(2) and N-ethylmaleimide. No inhibition by o-phenanthroline, 8-hydroxyquinoline, EDTA, disodium 4,5-dihydroxy-m-benzenedisulfonate, fluoride, azide, KCl, LiCl, NaCl, BaCl(2), MnCl(2), MgCl(2), PBCl, ZnCl(2), CoCl(2), SnCl(2), FeSO(4), FeCl(3), NiCl(2), CdCl(2), AlCl(3), iodoacetic acid, hydro-xylamine, phenylhydrazine, semicarbazide, cysteamine, alpha,alpha-dipyridyl and urea. Flavin-dependent monooxygenase (FMO) that catalyzes the decarboxylative hydroxylation of 6-hydroxynicotinic acid (6-HNA) to 2,5-dihydroxypyridine (2,5-DHP) with concomitant oxidation of NADH, a step in the aerobic nicotinate degradation pathway. Uses NADH in preference to NADPH as an electron donor. This Pseudomonas fluorescens protein is 6-hydroxynicotinate 3-monooxygenase (nicC).